A 2797-amino-acid polypeptide reads, in one-letter code: Nonribosomal peptide synthetase penN (2797 aa).

The adenylation 1 stretch occupies residues 239-625; the sequence is SRPDHPAICA…ARKDSQVKIR (387 aa). In terms of domain architecture, Carrier 1 spans 751 to 824; the sequence is TDTERHVHRF…DIVSLVRTAT (74 aa). Ser-785 carries the O-(pantetheine 4'-phosphoryl)serine modification. The segment at 830 to 856 is disordered; that stretch reads PSAGAEISRSDAPTESPATGSFEGSGY. Residues 870–1299 are condensation 1; sequence QSFSQARMWF…DIEIGSLLLT (430 aa). The adenylation 2 stretch occupies residues 1328–1731; sequence FHQQVAAHGD…GRMDQQVKIR (404 aa). Residues 1857–1953 are methyltransferase; sequence LEIGTGTGMI…VIKQLIQLHD (97 aa). Positions 2277 to 2351 constitute a Carrier 2 domain; sequence SFTDDIERAM…RLAGRVRGFR (75 aa). An O-(pantetheine 4'-phosphoryl)serine modification is found at Ser-2311. The interval 2516-2658 is condensation 2; it reads YDGISLSSIL…VNRTLIRVQL (143 aa).

The protein belongs to the NRP synthetase family.

The enzyme catalyses O-methyl-L-tyrosine + anthranilate + S-adenosyl-L-methionine + 2 ATP = (-)-4'-methoxycyclopeptine + 2 AMP + S-adenosyl-L-homocysteine + 2 diphosphate + 2 H(+). It carries out the reaction anthranilate + L-phenylalanine + S-adenosyl-L-methionine + 2 ATP = cyclopeptine + 2 AMP + S-adenosyl-L-homocysteine + 2 diphosphate + 2 H(+). It participates in secondary metabolite biosynthesis. Its pathway is alkaloid biosynthesis. It functions in the pathway mycotoxin biosynthesis. In terms of biological role, nonribosomal peptide synthetase; part of the gene cluster that mediates the biosynthesis of penigequinolones, potent insecticidal alkaloids that contain a highly modified 10-carbon prenyl group. The first stage is catalyzed by the nonribosomal peptide synthetase penN that condenses anthranilic acid and O-methyl-L-tyrosine to produce 4'-methoxycyclopeptin. 4'-methoxycyclopeptin is then converted to 4'-methoxydehydrocyclopeptin by the ketoglutarate-dependent dioxygenase penM through dehydrogenation to form a double bond between C-alpha and C-beta of the O-methyltyrosine side chain. PenM also converts its first product methoxydehydrocyclopeptin to 4'-methoxycyclopenin. The following conversion of 4'methoxycyclopenin into 4'-methoxyviridicatin is catalyzed by the cyclopenase penL. 4'-methoxyviridicatin is the precursor of quinolone natural products, and is further converted to quinolinone B. The prenyltransferase penI then catalyzes the canonical Friedel-Crafts alkylation of quinolinone B with dimethylallyl cation to yield dimethylallyl quinolone, which is subjected to FAD-dependent dehydrogenation by the FAD-linked oxidoreductase penH to yield conjugated aryl diene. The delta(3') double bond then serves as the site of the second alkylation with DMAPP catalyzed by the prenyltransferase penG to yield a carbenium ion intermediate, which can be attacked by H(2)O to yield a styrenyl quinolone containing a C3'-hydroxyprenyl chain, or undergo cyclization to yield yaequinolones J1 and J2. The conversion of the styrenyl quinolone into the tetrahydrofuran-containing yaequinolone C is performed by the FAD-dependent monooxygenase penE and involves epoxidation of the terminal C7'-C8' olefin, followed by epoxide ring opening initiated by the C3' hydroxyl group. The predicted cysteine hydrolase penJ acts as an epoxide hydrolase that enhances the rate of the 5-exo-tet cyclization step, increasing the yield of yaequinolone C. PenF catalyzes the cationic rearrangement of the epoxide formed by penE (before ring opening to produce yaequinolone C) into yaequinolone D. Finally, the short-chain dehydrogenase/reductase (SDR)-like reductase penD, catalyzes both the dehydration of yaequinolone D and the reduction of the resulting oxonium to yield penigequinolone. This is Nonribosomal peptide synthetase penN from Penicillium thymicola.